The chain runs to 488 residues: DELTA-alicitoxin-Pse2b (488 aa).

The first 21 residues, 1–21 (MSKPIIFLLTAFVVLTDLGAT), serve as a signal peptide directing secretion. An MACPF domain is found at 24–344 (TEKVEVKAKP…GYLNFDCAYE (321 aa)). An EGF-like domain is found at 369-398 (VCKLGPEGCHSDDDCESDDLIYCACCGDSC). 3 cysteine pairs are disulfide-bonded: C370-C383, C377-C391, and C393-C398.

The protein localises to the secreted. It localises to the nematocyst. Its function is as follows. Causes lethal toxicity to the shrimp Palaemon paucidence, and hemolytic activity toward sheep red blood cells. The chain is DELTA-alicitoxin-Pse2b from Phyllodiscus semoni (Night anemone).